Consider the following 603-residue polypeptide: ABC transporter E family member 1 (603 aa).

4Fe-4S ferredoxin-type domains are found at residues 7-39 (RIAI…KLCI) and 46-75 (KSAF…IINL). ABC transporter domains lie at 70-315 (IQII…FLAG) and 344-566 (VKSY…LSHL). Residues 110 to 117 (GTNGIGKS) and 381 to 388 (GENGTGKT) contribute to the ATP site.

Belongs to the ABC transporter superfamily. ABCE family. Expressed in roots, stems, leaves, flowers and siliques.

The protein localises to the membrane. In Arabidopsis thaliana (Mouse-ear cress), this protein is ABC transporter E family member 1 (ABCE1).